The sequence spans 47 residues: Glyceraldehyde-3-phosphate dehydrogenase, cytosolic (47 aa).

This sequence belongs to the glyceraldehyde-3-phosphate dehydrogenase family. Homotetramer.

The protein localises to the cytoplasm. It carries out the reaction D-glyceraldehyde 3-phosphate + phosphate + NAD(+) = (2R)-3-phospho-glyceroyl phosphate + NADH + H(+). It functions in the pathway carbohydrate degradation; glycolysis; pyruvate from D-glyceraldehyde 3-phosphate: step 1/5. In Pseudotsuga menziesii (Douglas-fir), this protein is Glyceraldehyde-3-phosphate dehydrogenase, cytosolic.